A 159-amino-acid chain; its full sequence is Thymic stromal lymphopoietin (159 aa).

The N-terminal stretch at M1–T28 is a signal peptide. Disulfide bonds link C34/C110, C69/C75, and C90/C137. N-linked (GlcNAc...) asparagine glycosylation occurs at N64. Residue N119 is glycosylated (N-linked (GlcNAc...) asparagine).

Interacts with a receptor composed of CRLF2 and IL7R. Binding of TSLP to CRLF2/TSLPR is a mechanistic prerequisite for recruitment of IL7R to the high-affinity ternary complex. Isoform 1 is expressed in a number of tissues including heart, liver and prostate. Isoform 2 is the predominant form in keratinocytes of oral mucosa, skin and in salivary glands. It is secreted into saliva.

Its subcellular location is the secreted. Its function is as follows. Cytokine that induces the release of T-cell-attracting chemokines from monocytes and, in particular, enhances the maturation of CD11c(+) dendritic cells. Can induce allergic inflammation by directly activating mast cells. In terms of biological role, may act as an antimicrobial peptide in the oral cavity and on the skin. This chain is Thymic stromal lymphopoietin (TSLP), found in Homo sapiens (Human).